Reading from the N-terminus, the 513-residue chain is 2-isopropylmalate synthase (513 aa).

The 263-residue stretch at 4–266 folds into the Pyruvate carboxyltransferase domain; the sequence is IEFFDTSLRD…KSPLVLAETM (263 aa). Mn(2+)-binding residues include Asp-13, His-201, His-203, and Asn-237. Residues 390 to 513 are regulatory domain; that stretch reads ILNNVQIDGH…VEQISAHDGI (124 aa).

Belongs to the alpha-IPM synthase/homocitrate synthase family. LeuA type 1 subfamily. Homodimer. Requires Mn(2+) as cofactor.

It is found in the cytoplasm. The catalysed reaction is 3-methyl-2-oxobutanoate + acetyl-CoA + H2O = (2S)-2-isopropylmalate + CoA + H(+). It participates in amino-acid biosynthesis; L-leucine biosynthesis; L-leucine from 3-methyl-2-oxobutanoate: step 1/4. Catalyzes the condensation of the acetyl group of acetyl-CoA with 3-methyl-2-oxobutanoate (2-ketoisovalerate) to form 3-carboxy-3-hydroxy-4-methylpentanoate (2-isopropylmalate). The chain is 2-isopropylmalate synthase from Lactococcus lactis subsp. cremoris (strain SK11).